A 605-amino-acid chain; its full sequence is DNA mismatch repair protein MutL (605 aa).

Belongs to the DNA mismatch repair MutL/HexB family.

In terms of biological role, this protein is involved in the repair of mismatches in DNA. It is required for dam-dependent methyl-directed DNA mismatch repair. May act as a 'molecular matchmaker', a protein that promotes the formation of a stable complex between two or more DNA-binding proteins in an ATP-dependent manner without itself being part of a final effector complex. This chain is DNA mismatch repair protein MutL, found in Pelotomaculum thermopropionicum (strain DSM 13744 / JCM 10971 / SI).